A 209-amino-acid polypeptide reads, in one-letter code: MSQQVGNSIRRKLVIVGDGACGKTCLLIVFSKGQFPEVYVPTVFENYVADVEVDGRRVELALWDTAGQEDYDRLRPLSYPDSNVVLICFSIDLPDSLENVQEKWIAEVLHFCQGVPIILVGCKVDLRNDPQTIEQLRQEGQQPVTSQEGQSVADQIGATGYYECSAKTGYGVREVFEAATRASLMGKSKTNGKAKKNTTEKKKKKCVLL.

N-acetylserine is present on Ser2. Residue 17–24 (GDGACGKT) coordinates GTP. An Effector region motif is present at residues 39-47 (YVPTVFENY). GTP is bound by residues 64–68 (DTAGQ) and 122–125 (CKVD). The disordered stretch occupies residues 187–209 (KSKTNGKAKKNTTEKKKKKCVLL). The segment covering 190–209 (TNGKAKKNTTEKKKKKCVLL) has biased composition (basic residues). Cys206 bears the Cysteine methyl ester mark. Cys206 carries S-geranylgeranyl cysteine lipidation. The propeptide at 207 to 209 (VLL) is removed in mature form.

This sequence belongs to the small GTPase superfamily. Rho family. Interacts with BEM4; the interaction is direct. Interacts with SEC3; the interaction is direct. Interacts with the GAP BAG7. Interacts with the GAP LRG1. Interacts with the GAP SAC7. Interacts with the GAP RDI1. Interacts with the 1,3-beta-glucan synthase component FKS1. Interacts with the protein kinase PKC1. Interacts with the G protein beta subunit STE4. Interacts with SKN7. Interacts with TUS1. Interacts with BNI1.

It is found in the cell membrane. Its subcellular location is the endosome membrane. The protein localises to the peroxisome membrane. It catalyses the reaction GTP + H2O = GDP + phosphate + H(+). With respect to regulation, alternates between an inactive form bound to GDP and an active form bound to GTP. Activated by the guanine nucleotide-exchange factors (GEFs) ROM1, ROM2 and TUS1, and inactivated by GTPase-activating proteins (GAPs) BAG7, BEM2, LRG1, and SAC7, and the Rho GDP-dissociation inhibitor RDI1. The different GAPs regulate RHO1 in a target-specific manner. Acts as a central regulator in the cell wall integrity signaling pathway, which is regulated by the cell cycle and in response to various types of cell wall stress. Integrates signals from different cell surface sensors, and activates a set of effectors, regulating processes including beta-glucan synthesis at the site of wall remodeling, gene expression related to cell wall biogenesis, organization of the actin cytoskeleton, and protein- and secretory vesicle-targeting to the growth site. Activates the protein kinase C (PKC1) MAP kinase cascade, the beta-1,3-glucan synthase (FKS1), the formin BNI1, the exocyst component SEC3 and the transcription factor SKN7. The sequence is that of GTP-binding protein RHO1 (RHO1) from Saccharomyces cerevisiae (strain ATCC 204508 / S288c) (Baker's yeast).